The chain runs to 324 residues: Lipoyl synthase (324 aa).

[4Fe-4S] cluster contacts are provided by cysteine 71, cysteine 76, cysteine 82, cysteine 97, cysteine 101, cysteine 104, and serine 311. In terms of domain architecture, Radical SAM core spans 83 to 300 (FGHGTATFLI…GDKAREMGFT (218 aa)).

This sequence belongs to the radical SAM superfamily. Lipoyl synthase family. The cofactor is [4Fe-4S] cluster.

It localises to the cytoplasm. The catalysed reaction is [[Fe-S] cluster scaffold protein carrying a second [4Fe-4S](2+) cluster] + N(6)-octanoyl-L-lysyl-[protein] + 2 oxidized [2Fe-2S]-[ferredoxin] + 2 S-adenosyl-L-methionine + 4 H(+) = [[Fe-S] cluster scaffold protein] + N(6)-[(R)-dihydrolipoyl]-L-lysyl-[protein] + 4 Fe(3+) + 2 hydrogen sulfide + 2 5'-deoxyadenosine + 2 L-methionine + 2 reduced [2Fe-2S]-[ferredoxin]. It participates in protein modification; protein lipoylation via endogenous pathway; protein N(6)-(lipoyl)lysine from octanoyl-[acyl-carrier-protein]: step 2/2. Functionally, catalyzes the radical-mediated insertion of two sulfur atoms into the C-6 and C-8 positions of the octanoyl moiety bound to the lipoyl domains of lipoate-dependent enzymes, thereby converting the octanoylated domains into lipoylated derivatives. This Nitrosococcus oceani (strain ATCC 19707 / BCRC 17464 / JCM 30415 / NCIMB 11848 / C-107) protein is Lipoyl synthase.